We begin with the raw amino-acid sequence, 628 residues long: Leucine-rich repeat and fibronectin type-III domain-containing protein 3 (628 aa).

The N-terminal stretch at 1 to 16 (MAVLPLLLCLLPLAPA) is a signal peptide. At 17-540 (SSPPQPASPS…APHAPFLGGT (524 aa)) the chain is on the extracellular side. The 41-residue stretch at 19–59 (PPQPASPSPCPRRCRCQTQSLPLSVLCPGAGLLFVPPSLDR) folds into the LRRNT domain. LRR repeat units lie at residues 60–83 (RAAE…ANMT), 84–105 (GLLH…AFSD), 108–129 (ALRA…QLRG), 132–153 (NLRH…ALDD), 157–178 (TLED…ALGR), 181–202 (NVNT…AFSR), and 205–226 (KLAR…PLFS). Residues 249–295 (NPLHCNCELVWLRRLAREDDLEACASPPALGGRYFWAVGEEEFVCEP) form the LRRCT domain. One can recognise an Ig-like domain in the interval 295 to 382 (PPVVTHRSPP…GEATAAVELT (88 aa)). Cys-317 and Cys-366 are disulfide-bonded. Asn-348 and Asn-393 each carry an N-linked (GlcNAc...) asparagine glycan. Positions 380–433 (ELTVGPPPPPQLANSTSCDPPRDGEPDALTPPSAASASASAKAAEAGPPTDRGV) are disordered. Residues 410 to 428 (PPSAASASASAKAAEAGPP) show a composition bias toward low complexity. The Fibronectin type-III domain occupies 427 to 525 (PPTDRGVQVT…GCNRFSTEPA (99 aa)). Residues 541 to 561 (MIIALGGVIVASVLVFIFVLL) traverse the membrane as a helical segment. Residues 562–628 (MRYKVHGGQP…WGPSHEPMGP (67 aa)) lie on the Cytoplasmic side of the membrane. Positions 570–609 (QPPGKTKASAPVSSVCSQTNGALGPMPAPPAPEPSAPRAH) are disordered. Over residues 580–590 (PVSSVCSQTNG) the composition is skewed to polar residues. Positions 595 to 604 (MPAPPAPEPS) are enriched in pro residues.

It belongs to the LRFN family. In terms of assembly, can form heteromeric complexes with LRFN1, LRFN2, LRFN4 and LRFN5. Able to form homomeric complexes across cell junctions, between adjacent cells. Does not interact with DLG4. Post-translationally, N-glycosylated.

It is found in the cell membrane. It localises to the cell projection. The protein resides in the axon. Its subcellular location is the dendrite. The protein localises to the synapse. It is found in the presynaptic cell membrane. It localises to the postsynaptic cell membrane. Cell adhesion molecule that mediates homophilic cell-cell adhesion in a Ca(2+)-independent manner. Promotes neurite outgrowth in hippocampal neurons. This chain is Leucine-rich repeat and fibronectin type-III domain-containing protein 3 (LRFN3), found in Bos taurus (Bovine).